We begin with the raw amino-acid sequence, 142 residues long: 3-hydroxyacyl-[acyl-carrier-protein] dehydratase FabZ (142 aa).

Histidine 47 is an active-site residue.

It belongs to the thioester dehydratase family. FabZ subfamily.

The protein localises to the cytoplasm. It catalyses the reaction a (3R)-hydroxyacyl-[ACP] = a (2E)-enoyl-[ACP] + H2O. Its function is as follows. Involved in unsaturated fatty acids biosynthesis. Catalyzes the dehydration of short chain beta-hydroxyacyl-ACPs and long chain saturated and unsaturated beta-hydroxyacyl-ACPs. The sequence is that of 3-hydroxyacyl-[acyl-carrier-protein] dehydratase FabZ from Coxiella burnetii (strain RSA 331 / Henzerling II).